The sequence spans 312 residues: RNA pseudouridylate synthase domain-containing protein 1 (312 aa).

Met1 is modified (N-acetylmethionine). Residue Asp67 is part of the active site. The interval 256–298 is disordered; it reads ATPDPDPEDRGPRPGSPSALLPGPGRPPPPPTKPPETEAQRGP. The span at 279–289 shows a compositional bias: pro residues; it reads PGRPPPPPTKP.

It belongs to the pseudouridine synthase RluA family.

This is RNA pseudouridylate synthase domain-containing protein 1 (RPUSD1) from Homo sapiens (Human).